A 103-amino-acid chain; its full sequence is Large ribosomal subunit protein bL21 (103 aa).

The protein belongs to the bacterial ribosomal protein bL21 family. Part of the 50S ribosomal subunit. Contacts protein L20.

Functionally, this protein binds to 23S rRNA in the presence of protein L20. This chain is Large ribosomal subunit protein bL21, found in Ralstonia nicotianae (strain ATCC BAA-1114 / GMI1000) (Ralstonia solanacearum).